Consider the following 497-residue polypeptide: Glycerol kinase (497 aa).

T11 contacts ADP. 3 residues coordinate ATP: T11, S12, and S13. Position 11 (T11) interacts with sn-glycerol 3-phosphate. R15 contributes to the ADP binding site. Sn-glycerol 3-phosphate contacts are provided by R81, E82, Y133, and D242. Glycerol-binding residues include R81, E82, Y133, D242, and Q243. Positions 264 and 307 each coordinate ADP. The ATP site is built by T264, G307, Q311, and G412. ADP is bound by residues G412 and N416.

It belongs to the FGGY kinase family.

It carries out the reaction glycerol + ATP = sn-glycerol 3-phosphate + ADP + H(+). It participates in polyol metabolism; glycerol degradation via glycerol kinase pathway; sn-glycerol 3-phosphate from glycerol: step 1/1. Inhibited by fructose 1,6-bisphosphate (FBP). Its function is as follows. Key enzyme in the regulation of glycerol uptake and metabolism. Catalyzes the phosphorylation of glycerol to yield sn-glycerol 3-phosphate. The sequence is that of Glycerol kinase from Leptothrix cholodnii (strain ATCC 51168 / LMG 8142 / SP-6) (Leptothrix discophora (strain SP-6)).